We begin with the raw amino-acid sequence, 363 residues long: D(1) dopamine receptor (363 aa).

At 1-24 (MAVLDLNLTTVIDSGFMESDRSVR) the chain is on the extracellular side. N-linked (GlcNAc...) asparagine glycosylation is present at Asn-7. A helical membrane pass occupies residues 25 to 45 (VLTGCFLSVLILSTLLGNTLV). At 46–61 (CAAVTKFRHLRSKVTN) the chain is on the cytoplasmic side. A helical transmembrane segment spans residues 62-81 (FFVISLAVSDLLVAVLVMPW). The Extracellular portion of the chain corresponds to 82–98 (KAVTEVAGFWPFGAFCD). An intrachain disulfide couples Cys-97 to Cys-187. The helical transmembrane segment at 99–120 (IWVAFDIMCSTASILNLCVISV) threads the bilayer. Topologically, residues 121 to 139 (DRYWAISSPFRYERKMTPR) are cytoplasmic. The helical transmembrane segment at 140-164 (VAFVMISGAWTLSVLISFIPVQLKW) threads the bilayer. The Extracellular segment spans residues 165-194 (HKAQPIGFLEVNASRRDLPTDNCDSSLNRT). A helical membrane pass occupies residues 195-219 (YAISSSLISFYIPVAIMIVTYTQIY). Residues 220–271 (RIAQKQIRRISALERAAESAQIRHDSMGSGSNMDLESSFKLSFKRETKVLKT) are Cytoplasmic-facing. Residues 272–297 (LSVIMGVFVCCWLPFFILNCMVPFCK) traverse the membrane as a helical segment. At 298–310 (RTSNGLPCISPTT) the chain is on the extracellular side. The chain crosses the membrane as a helical span at residues 311 to 330 (FDVFVWFGWANSSLNPIIYA). The Cytoplasmic segment spans residues 331–363 (FNADFRRAFAILLGCQRLCPGSISMETPSLNKN). Cys-345 carries S-palmitoyl cysteine lipidation.

Belongs to the G-protein coupled receptor 1 family. In terms of tissue distribution, retina.

Its subcellular location is the cell membrane. It localises to the cell projection. The protein localises to the cilium membrane. In terms of biological role, dopamine receptor whose activity is mediated by G proteins which activate adenylyl cyclase. Could be involved in growth hormone release. In Carassius auratus (Goldfish), this protein is D(1) dopamine receptor.